A 540-amino-acid chain; its full sequence is Isocitrate lyase (540 aa).

103-105 (SGW) lines the substrate pocket. Residue Asp-187 coordinates Mg(2+). Cys-225 functions as the Proton acceptor in the catalytic mechanism. Substrate contacts are provided by residues 226-227 (GH), 385-389 (NNSPS), and Thr-458.

The protein belongs to the isocitrate lyase/PEP mutase superfamily. Isocitrate lyase family. In terms of assembly, homotetramer. Requires Mg(2+) as cofactor.

It carries out the reaction D-threo-isocitrate = glyoxylate + succinate. The protein operates within carbohydrate metabolism; glyoxylate cycle; (S)-malate from isocitrate: step 1/2. Its pathway is one-carbon metabolism; formaldehyde assimilation via serine pathway. In the presence of magnesium, inhibited by oxalate, potassium cyanide, manganese, silver, cadmium and to a lesser extent by succinate, glycolate, iodoacetamide, DL-penicillamine, aluminum, sodium, potassium, lithium and strontium. In terms of biological role, involved in the metabolic adaptation in response to environmental changes. Catalyzes the reversible formation of succinate and glyoxylate from isocitrate, a key step of the glyoxylate cycle, which operates as an anaplerotic route for replenishing the tricarboxylic acid cycle during growth on fatty acid substrates. May be involved in the assimilation of one-carbon compounds via the isocitrate lyase-positive serine pathway. The protein is Isocitrate lyase of Hyphomicrobium methylovorum.